Reading from the N-terminus, the 411-residue chain is Serine--tRNA ligase (411 aa).

Position 226–228 (226–228 (TSE)) interacts with L-serine. Residue 257-259 (RKE) coordinates ATP. An L-serine-binding site is contributed by Glu-280. 344 to 347 (EISS) contributes to the ATP binding site. Ser-379 contacts L-serine.

Belongs to the class-II aminoacyl-tRNA synthetase family. Type-1 seryl-tRNA synthetase subfamily. Homodimer. The tRNA molecule binds across the dimer.

It localises to the cytoplasm. The catalysed reaction is tRNA(Ser) + L-serine + ATP = L-seryl-tRNA(Ser) + AMP + diphosphate + H(+). The enzyme catalyses tRNA(Sec) + L-serine + ATP = L-seryl-tRNA(Sec) + AMP + diphosphate + H(+). The protein operates within aminoacyl-tRNA biosynthesis; selenocysteinyl-tRNA(Sec) biosynthesis; L-seryl-tRNA(Sec) from L-serine and tRNA(Sec): step 1/1. In terms of biological role, catalyzes the attachment of serine to tRNA(Ser). Is also able to aminoacylate tRNA(Sec) with serine, to form the misacylated tRNA L-seryl-tRNA(Sec), which will be further converted into selenocysteinyl-tRNA(Sec). This chain is Serine--tRNA ligase, found in Campylobacter jejuni (strain RM1221).